The sequence spans 975 residues: Glycine dehydrogenase (decarboxylating) (975 aa).

An N6-(pyridoxal phosphate)lysine modification is found at Lys-723.

This sequence belongs to the GcvP family. In terms of assembly, the glycine cleavage system is composed of four proteins: P, T, L and H. The cofactor is pyridoxal 5'-phosphate.

The catalysed reaction is N(6)-[(R)-lipoyl]-L-lysyl-[glycine-cleavage complex H protein] + glycine + H(+) = N(6)-[(R)-S(8)-aminomethyldihydrolipoyl]-L-lysyl-[glycine-cleavage complex H protein] + CO2. The glycine cleavage system catalyzes the degradation of glycine. The P protein binds the alpha-amino group of glycine through its pyridoxal phosphate cofactor; CO(2) is released and the remaining methylamine moiety is then transferred to the lipoamide cofactor of the H protein. In Burkholderia thailandensis (strain ATCC 700388 / DSM 13276 / CCUG 48851 / CIP 106301 / E264), this protein is Glycine dehydrogenase (decarboxylating).